The following is a 332-amino-acid chain: Small ribosomal subunit biogenesis GTPase RsgA (332 aa).

Residues 103–259 (RQQLIAANLD…LIDTPGMREL (157 aa)) enclose the CP-type G domain. Residues 148–151 (TKVD) and 201–209 (GSSGAGKST) contribute to the GTP site. 4 residues coordinate Zn(2+): Cys281, Cys286, His288, and Cys294.

It belongs to the TRAFAC class YlqF/YawG GTPase family. RsgA subfamily. Monomer. Associates with 30S ribosomal subunit, binds 16S rRNA. Requires Zn(2+) as cofactor.

The protein resides in the cytoplasm. One of several proteins that assist in the late maturation steps of the functional core of the 30S ribosomal subunit. Helps release RbfA from mature subunits. May play a role in the assembly of ribosomal proteins into the subunit. Circularly permuted GTPase that catalyzes slow GTP hydrolysis, GTPase activity is stimulated by the 30S ribosomal subunit. The chain is Small ribosomal subunit biogenesis GTPase RsgA from Xylella fastidiosa (strain M12).